We begin with the raw amino-acid sequence, 559 residues long: Thermosome subunit alpha (559 aa).

Positions 536–552 (SGEKKGEKKEGGEEEKS) are enriched in basic and acidic residues. The tract at residues 536 to 559 (SGEKKGEKKEGGEEEKSSTPSSLE) is disordered.

The protein belongs to the TCP-1 chaperonin family. Forms a Heterooligomeric complex of two stacked nine-membered rings; one of alpha and the other of beta subunits.

In terms of biological role, molecular chaperone; binds unfolded polypeptides in vitro, and has a weak ATPase activity. The chain is Thermosome subunit alpha (thsA) from Sulfurisphaera tokodaii (strain DSM 16993 / JCM 10545 / NBRC 100140 / 7) (Sulfolobus tokodaii).